A 366-amino-acid chain; its full sequence is Protein RecA (366 aa).

An ATP-binding site is contributed by 77 to 84 (GPESSGKT). The disordered stretch occupies residues 346-366 (IGGPGGEDDDAGGAAGVGDEA).

Belongs to the RecA family.

The protein localises to the cytoplasm. Its function is as follows. Can catalyze the hydrolysis of ATP in the presence of single-stranded DNA, the ATP-dependent uptake of single-stranded DNA by duplex DNA, and the ATP-dependent hybridization of homologous single-stranded DNAs. It interacts with LexA causing its activation and leading to its autocatalytic cleavage. The protein is Protein RecA of Rhodospirillum rubrum (strain ATCC 11170 / ATH 1.1.1 / DSM 467 / LMG 4362 / NCIMB 8255 / S1).